The following is a 179-amino-acid chain: Large ribosomal subunit protein uL6 (179 aa).

It belongs to the universal ribosomal protein uL6 family. In terms of assembly, part of the 50S ribosomal subunit.

In terms of biological role, this protein binds to the 23S rRNA, and is important in its secondary structure. It is located near the subunit interface in the base of the L7/L12 stalk, and near the tRNA binding site of the peptidyltransferase center. This Synechococcus elongatus (strain ATCC 33912 / PCC 7942 / FACHB-805) (Anacystis nidulans R2) protein is Large ribosomal subunit protein uL6.